The following is a 372-amino-acid chain: Gibberellin 20 oxidase 1 (372 aa).

One can recognise a Fe2OG dioxygenase domain in the interval arginine 209–proline 309. The Fe cation site is built by histidine 234, aspartate 236, and histidine 290. Residue arginine 300 is part of the active site.

It belongs to the iron/ascorbate-dependent oxidoreductase family. GA20OX subfamily. Fe(2+) is required as a cofactor. L-ascorbate serves as cofactor. In terms of tissue distribution, preferentially expressed in reproductive organs. Expressed in the epithelium of embryos and the tapetum of anthers. Expressed at low levels in the shoot apical meristem.

It catalyses the reaction gibberellin A12 + 2 2-oxoglutarate + 3 O2 + H(+) = gibberellin A9 + 2 succinate + 3 CO2 + 2 H2O. The enzyme catalyses gibberellin A53 + 2 2-oxoglutarate + 3 O2 + H(+) = gibberellin A20 + 2 succinate + 3 CO2 + 2 H2O. Key oxidase enzyme in the biosynthesis of gibberellin. Catalyzes the conversion of GA12 and GA53 to GA9 and GA20 respectively, via a three-step oxidation at C-20 of the GA skeleton. The chain is Gibberellin 20 oxidase 1 from Oryza sativa subsp. japonica (Rice).